The following is a 251-amino-acid chain: Probable transcriptional regulatory protein Arth_2304 (251 aa).

It belongs to the TACO1 family.

The protein resides in the cytoplasm. This chain is Probable transcriptional regulatory protein Arth_2304, found in Arthrobacter sp. (strain FB24).